The following is a 652-amino-acid chain: Acetyl-coenzyme A synthetase (652 aa).

CoA contacts are provided by residues 191-194 (RAGR), threonine 311, and asparagine 335. Residues 387-389 (GEP), 411-416 (DTWWQT), aspartate 500, and arginine 515 contribute to the ATP site. Serine 523 lines the CoA pocket. Arginine 526 is an ATP binding site. Residues valine 537, histidine 539, and isoleucine 542 each coordinate Mg(2+). Arginine 584 is a CoA binding site. Lysine 609 bears the N6-acetyllysine mark.

The protein belongs to the ATP-dependent AMP-binding enzyme family. It depends on Mg(2+) as a cofactor. Post-translationally, acetylated. Deacetylation by the SIR2-homolog deacetylase activates the enzyme.

The enzyme catalyses acetate + ATP + CoA = acetyl-CoA + AMP + diphosphate. In terms of biological role, catalyzes the conversion of acetate into acetyl-CoA (AcCoA), an essential intermediate at the junction of anabolic and catabolic pathways. Acs undergoes a two-step reaction. In the first half reaction, Acs combines acetate with ATP to form acetyl-adenylate (AcAMP) intermediate. In the second half reaction, it can then transfer the acetyl group from AcAMP to the sulfhydryl group of CoA, forming the product AcCoA. Enables the cell to use acetate during aerobic growth to generate energy via the TCA cycle, and biosynthetic compounds via the glyoxylate shunt. Acetylates CheY, the response regulator involved in flagellar movement and chemotaxis. The protein is Acetyl-coenzyme A synthetase of Escherichia coli O157:H7.